We begin with the raw amino-acid sequence, 401 residues long: uncharacterized protein (401 aa).

Belongs to the herpesviridae BTRF1 family.

This is an uncharacterized protein from Connochaetes taurinus (Blue wildebeest).